We begin with the raw amino-acid sequence, 475 residues long: MACSLKDELLCSICLSIYQDPVSLGCEHYFCRRCITEHWVRQEAQGARDCPECRRTFAEPALAPSLKLANIVERYSAFPLDAILNARRAARPCQAHDKVKLFCLTDRALLCFFCDEPALHEQHQVTGIDDAFEELQRELKEQLQALQDSEREHTEALQLLKRQLAETKSSTKSLRTTIGEAFERLHRLLRERQKAMLEELEADTARTLTDIEQKVQRYSQQLRKVQEGAQILQERLAETDRHTFLAGVASLSERLKGKIHETNLTYEDFPTSKYTGPLQYTIWKSLFQDIHPVPAALTMDPGTAHQRLILSDDCTIVAYGNLHPQPLQDSPKRFDVEVSVLGSEAFSSGVHYWEVVVAEKTQWVIGLAHEAASRKGSIQIQPSRGFYCIVMHDGNQYSACTEPWTRLNVRDKLDKVGVFLDYDQGLLIFYNADDMSWLYTFREKFPGKLCSYFSPGQSHANGKNVQPLRINTVRI.

An RING-type zinc finger spans residues 11–54 (CSICLSIYQDPVSLGCEHYFCRRCITEHWVRQEAQGARDCPECR). The B box-type zinc finger occupies 88–128 (RAARPCQAHDKVKLFCLTDRALLCFFCDEPALHEQHQVTGI). Residues Cys-93, His-96, Cys-114, and His-120 each coordinate Zn(2+). A coiled-coil region spans residues 121–241 (EQHQVTGIDD…LQERLAETDR (121 aa)). Positions 277–475 (PLQYTIWKSL…QPLRINTVRI (199 aa)) constitute a B30.2/SPRY domain.

It belongs to the TRIM/RBCC family. In terms of assembly, interacts with the ubiquitin-conjugating enzyme, UBE2D2. Polyubiquitinated, autoubiquitinated in the presence of UBE2D2.

The protein localises to the cytoplasm. The catalysed reaction is S-ubiquitinyl-[E2 ubiquitin-conjugating enzyme]-L-cysteine + [acceptor protein]-L-lysine = [E2 ubiquitin-conjugating enzyme]-L-cysteine + N(6)-ubiquitinyl-[acceptor protein]-L-lysine.. It participates in protein modification; protein ubiquitination. E3 ubiquitin ligase that plays a role in antifungal immunity by mediating 'Lys-27'-linked ubiquitination of CARD9 downstream of C-type lectin receptors; leading to CARD9 activation, followed by activation of NF-kappa-B and MAP kinase p38 pathways. E3 ubiquitin ligase activity is dependent on E2 ubiquitin-conjugating enzyme UBE2D2. The sequence is that of E3 ubiquitin-protein ligase TRIM62 from Mus musculus (Mouse).